A 416-amino-acid chain; its full sequence is 4-hydroxy-3-methylbut-2-en-1-yl diphosphate synthase (flavodoxin) (416 aa).

The [4Fe-4S] cluster site is built by C304, C307, C350, and E357.

This sequence belongs to the IspG family. [4Fe-4S] cluster is required as a cofactor.

It catalyses the reaction (2E)-4-hydroxy-3-methylbut-2-enyl diphosphate + oxidized [flavodoxin] + H2O + 2 H(+) = 2-C-methyl-D-erythritol 2,4-cyclic diphosphate + reduced [flavodoxin]. It functions in the pathway isoprenoid biosynthesis; isopentenyl diphosphate biosynthesis via DXP pathway; isopentenyl diphosphate from 1-deoxy-D-xylulose 5-phosphate: step 5/6. In terms of biological role, converts 2C-methyl-D-erythritol 2,4-cyclodiphosphate (ME-2,4cPP) into 1-hydroxy-2-methyl-2-(E)-butenyl 4-diphosphate. This chain is 4-hydroxy-3-methylbut-2-en-1-yl diphosphate synthase (flavodoxin), found in Allorhizobium ampelinum (strain ATCC BAA-846 / DSM 112012 / S4) (Agrobacterium vitis (strain S4)).